The sequence spans 431 residues: tRNA(Ile)-lysidine synthase (431 aa).

Residue 26–31 participates in ATP binding; the sequence is SGGVDS.

This sequence belongs to the tRNA(Ile)-lysidine synthase family.

The protein localises to the cytoplasm. The catalysed reaction is cytidine(34) in tRNA(Ile2) + L-lysine + ATP = lysidine(34) in tRNA(Ile2) + AMP + diphosphate + H(+). Functionally, ligates lysine onto the cytidine present at position 34 of the AUA codon-specific tRNA(Ile) that contains the anticodon CAU, in an ATP-dependent manner. Cytidine is converted to lysidine, thus changing the amino acid specificity of the tRNA from methionine to isoleucine. The sequence is that of tRNA(Ile)-lysidine synthase from Wolbachia pipientis wMel.